The following is a 384-amino-acid chain: Urea transporter 1 (384 aa).

The disordered stretch occupies residues 1 to 23 (MDDNPTAVKLDQGGNQAPQGQGR). 5 helical membrane-spanning segments follow: residues 61–81 (ISQVVFVSNPISGILILVGLL), 85–105 (PWCALNGCVGTVVSTLTALLL), 111–131 (AITAGLQGYNATLVGILMAIY), 138–158 (FWWLLFPVSAMSMTCPIFSSA), and 168–188 (LPVFTLPFNMALSMYLSATGH). An N-linked (GlcNAc...) asparagine glycan is attached at Asn-206. The next 3 helical transmembrane spans lie at 237–257 (GGIFLGAILLSSPLMCLHAAI), 279–299 (GLWGFNSSLACIAIGGMFMAL), and 327–347 (VVGLPSCTWPFCLATLLFLLL).

It belongs to the urea transporter family. Homotrimer; each subunit contains a pore through which urea permeates. Identified in a complex with STOM.

The protein resides in the cell membrane. Its subcellular location is the basolateral cell membrane. The enzyme catalyses urea(in) = urea(out). Mediates the transport of urea driven by a concentration gradient across the cell membranes of erythrocytes and the renal inner medullary collecting duct which is critical to the urinary concentrating mechanism. Facilitates water transport in erythrocytes. This Capra hircus (Goat) protein is Urea transporter 1 (SLC14A1).